The primary structure comprises 178 residues: Sec-independent protein translocase protein TatB (178 aa).

The chain crosses the membrane as a helical span at residues 1–21; sequence MFDIGWSELVVIAVVALIAIG. The span at 77-86 shows a compositional bias: polar residues; that stretch reads TSGNLMTKLT. The disordered stretch occupies residues 77 to 178; it reads TSGNLMTKLT…HEAVKDAKAS (102 aa). Positions 93–102 are enriched in basic and acidic residues; the sequence is PKLEDLDKPA. Residues 155–165 are compositionally biased toward low complexity; that stretch reads HATPEPAPATH. Positions 166-178 are enriched in basic and acidic residues; that stretch reads ETPHEAVKDAKAS.

Belongs to the TatB family. The Tat system comprises two distinct complexes: a TatABC complex, containing multiple copies of TatA, TatB and TatC subunits, and a separate TatA complex, containing only TatA subunits. Substrates initially bind to the TatABC complex, which probably triggers association of the separate TatA complex to form the active translocon.

Its subcellular location is the cell inner membrane. Part of the twin-arginine translocation (Tat) system that transports large folded proteins containing a characteristic twin-arginine motif in their signal peptide across membranes. Together with TatC, TatB is part of a receptor directly interacting with Tat signal peptides. TatB may form an oligomeric binding site that transiently accommodates folded Tat precursor proteins before their translocation. The protein is Sec-independent protein translocase protein TatB of Nitrobacter hamburgensis (strain DSM 10229 / NCIMB 13809 / X14).